A 330-amino-acid chain; its full sequence is Aspartate--ammonia ligase (330 aa).

This sequence belongs to the class-II aminoacyl-tRNA synthetase family. AsnA subfamily.

It localises to the cytoplasm. The enzyme catalyses L-aspartate + NH4(+) + ATP = L-asparagine + AMP + diphosphate + H(+). It functions in the pathway amino-acid biosynthesis; L-asparagine biosynthesis; L-asparagine from L-aspartate (ammonia route): step 1/1. The chain is Aspartate--ammonia ligase from Streptococcus pyogenes serotype M5 (strain Manfredo).